The primary structure comprises 285 residues: NAD kinase (285 aa).

Aspartate 64 acts as the Proton acceptor in catalysis. Residues 64-65 (DG), 140-141 (ND), arginine 151, arginine 168, aspartate 170, and 181-186 (TGYNLS) contribute to the NAD(+) site.

It belongs to the NAD kinase family. Requires a divalent metal cation as cofactor.

The protein localises to the cytoplasm. The enzyme catalyses NAD(+) + ATP = ADP + NADP(+) + H(+). Its function is as follows. Involved in the regulation of the intracellular balance of NAD and NADP, and is a key enzyme in the biosynthesis of NADP. Catalyzes specifically the phosphorylation on 2'-hydroxyl of the adenosine moiety of NAD to yield NADP. This chain is NAD kinase, found in Lachnoclostridium phytofermentans (strain ATCC 700394 / DSM 18823 / ISDg) (Clostridium phytofermentans).